The primary structure comprises 88 residues: UPF0250 protein Sama_2593 (88 aa).

The protein belongs to the UPF0250 family.

In Shewanella amazonensis (strain ATCC BAA-1098 / SB2B), this protein is UPF0250 protein Sama_2593.